A 100-amino-acid polypeptide reads, in one-letter code: MISLFHGLFLSLILFILGLTSLIVRRNILFILISLEIMMNAVGLALIVVGSYWHQADGQIMYIFVITLAASEASIALALLLQLYRRKKTLNIDILSEMNG.

3 helical membrane passes run 4–24 (LFHGLFLSLILFILGLTSLIV), 28–48 (ILFILISLEIMMNAVGLALIV), and 60–80 (IMYIFVITLAASEASIALALL).

This sequence belongs to the complex I subunit 4L family. As to quaternary structure, NDH-1 is composed of 13 different subunits. Subunits NuoA, H, J, K, L, M, N constitute the membrane sector of the complex.

Its subcellular location is the cell membrane. The enzyme catalyses a quinone + NADH + 5 H(+)(in) = a quinol + NAD(+) + 4 H(+)(out). Its function is as follows. NDH-1 shuttles electrons from NADH, via FMN and iron-sulfur (Fe-S) centers, to quinones in the respiratory chain. The immediate electron acceptor for the enzyme in this species is believed to be ubiquinone. Couples the redox reaction to proton translocation (for every two electrons transferred, four hydrogen ions are translocated across the cytoplasmic membrane), and thus conserves the redox energy in a proton gradient. The sequence is that of NADH-quinone oxidoreductase subunit K from Buchnera aphidicola subsp. Acyrthosiphon pisum (strain 5A).